The sequence spans 671 residues: MVVKRTQTDSRMQSTPGNHNHPDAHANAAYMTPPSMGALNANNSNSQLSTLTISPMTYLANNTSTDGSFLKERNAQNTDSLSREDYLRLWRHDALMQQQYKCAAFVGEKVLDITGNPNDAFWLAQVYCCTGDYARAKCLLTKEDLYNRSSACRYLAAFCLVKLYDWQGALNLLGETNPFRKDEKNANKLLMQDGGIKLEASMCYLRGQVYTNLSNFDRAKECYKEALMVDAKCYEAFDQLVSNHLLTADEEWDLVLKLNYSTYSKEDAAFLRSLYMLKLNKTSHEDELRRAEDYLSSINGLEKSSDLLLCKADTLFVRSRFIDVLAITTKILEIDPYNLDVYPLHLASLHESGEKNKLYLISNDLVDRHPEKAVTWLAVGIYYLCVNKISEARRYFSKSSTMDPQFGPAWIGFAHSFAIEGEHDQAISAYTTAARLFQGTHLPYLFLGMQHMQLGNILLANEYLQSSYALFQYDPLLLNELGVVAFNKSDMQTAINHFQNALLLVKKTQSNEKPWAATWANLGHAYRKLKMYDAAIDALNQGLLLSTNDANVHTAIALVYLHKKIPGLAITHLHESLAISPNEIMASDLLKRALEENSLTSGFLNSKYVFEDEVSEYMQQSNLNTSDKSMSMEDQSGKVTESVNDRTQVLYADSRSEMMMDDIEGNVSEQR.

The tract at residues 1–24 is disordered; the sequence is MVVKRTQTDSRMQSTPGNHNHPDA. 14 TPR repeats span residues 83–114, 117–142, 150–173, 198–229, 234–257, 268–296, 306–334, 341–368, 373–402, 407–435, 442–470, 475–507, 513–545, and 550–579; these read REDY…LDIT, PNDA…LLTK, SACR…LNLL, LEAS…ALMV, YEAF…LVLK, AAFL…DYLS, DLLL…ILEI, VYPL…LVDR, AVTW…SSTM, GPAW…TAAR, LPYL…SYAL, PLLL…LVKK, KPWA…GLLL, and ANVH…SLAI. A disordered region spans residues 622–643; sequence NLNTSDKSMSMEDQSGKVTESV.

As to quaternary structure, the APC/C is composed of at least 13 subunits: apc1, apc2, nuc2, apc4, apc5, cut9, apc8, apc10, apc11, hcn1, apc13, apc14 and apc15. Homodimer. Interacts directly with nuc2 and hcn1. Phosphorylated.

Its subcellular location is the nucleus. In terms of biological role, component of the anaphase-promoting complex/cyclosome (APC/C), a cell cycle-regulated E3 ubiquitin-protein ligase complex that controls progression through mitosis and the G1 phase of the cell cycle. The APC/C is thought to confer substrate specificity and, in the presence of ubiquitin-conjugating E2 enzymes, it catalyzes the formation of protein-ubiquitin conjugates that are subsequently degraded by the 26S proteasome. May play a pivotal role in the control of anaphase. This is Anaphase-promoting complex subunit cut9 (cut9) from Schizosaccharomyces pombe (strain 972 / ATCC 24843) (Fission yeast).